The primary structure comprises 1392 residues: Ankyrin repeat domain-containing protein 30B (1392 aa).

The segment at 1–21 (MKRLLAAAGKGVRGPEPPNPF) is disordered. ANK repeat units follow at residues 72-101 (KKRTALHWACVNGHAEVVTFLVDRKCQLNV), 105-134 (EGRTPLMKALQCEREACANILIDAGADLNY), 138-167 (YGNTALHYAVYSENLLMVATLLSYGAVIEV), 171-200 (ASLTPLLLAIQKRSKQTVEFLLTKNANANA), and 204-233 (SKCTALMLAICEGSSEIVGMLLQQNVDVFA). 6 disordered regions span residues 265–292 (PKNPQNTNPEGTSTGTPDEAAPLAERTP), 558–587 (AQMFPSESKQKDDEENSWDSESPCETVSQK), 636–656 (DRETFKAESPDKDGLLKPTCG), 671–690 (RETLKAESPDNDGLLKPTCG), 830–877 (KEGA…SDSE), and 904–926 (GKIEESPEKPSHFEPATEMQNSV). Polar residues-rich tracts occupy residues 267–280 (NPQNTNPEGTSTGT) and 576–586 (DSESPCETVSQ). The span at 636–650 (DRETFKAESPDKDGL) shows a compositional bias: basic and acidic residues. The span at 830–840 (KEGATKTVTGQ) shows a compositional bias: polar residues. Basic and acidic residues-rich tracts occupy residues 864–874 (LGRKEDTKSTS) and 904–915 (GKIEESPEKPSH). Coiled coils occupy residues 960–1168 (RELK…KQDK) and 1270–1318 (ETQC…QQLV).

As to expression, expressed in brain, breast and testis.

This Homo sapiens (Human) protein is Ankyrin repeat domain-containing protein 30B (ANKRD30B).